Here is a 623-residue protein sequence, read N- to C-terminus: Glutathione import ATP-binding protein GsiA (623 aa).

ABC transporter domains are found at residues 15 to 269 and 314 to 564; these read VENL…RALL and LRVR…RKLL. ATP-binding positions include 49-56 and 357-364; these read GESGSGKS.

It belongs to the ABC transporter superfamily. Glutathione importer (TC 3.A.1.5.11) family. As to quaternary structure, the complex is composed of two ATP-binding proteins (GsiA), two transmembrane proteins (GsiC and GsiD) and a solute-binding protein (GsiB).

It localises to the cell inner membrane. The catalysed reaction is glutathione(out) + ATP + H2O = glutathione(in) + ADP + phosphate + H(+). Its function is as follows. Part of the ABC transporter complex GsiABCD involved in glutathione import. Responsible for energy coupling to the transport system. This Escherichia coli O6:H1 (strain CFT073 / ATCC 700928 / UPEC) protein is Glutathione import ATP-binding protein GsiA.